Reading from the N-terminus, the 248-residue chain is Triosephosphate isomerase (248 aa).

Substrate is bound at residue 9-11 (NWK). Histidine 94 (electrophile) is an active-site residue. Glutamate 166 functions as the Proton acceptor in the catalytic mechanism. Substrate is bound by residues glycine 172, serine 212, and 233 to 234 (GG).

It belongs to the triosephosphate isomerase family. As to quaternary structure, homodimer.

It is found in the cytoplasm. The enzyme catalyses D-glyceraldehyde 3-phosphate = dihydroxyacetone phosphate. Its pathway is carbohydrate biosynthesis; gluconeogenesis. The protein operates within carbohydrate degradation; glycolysis; D-glyceraldehyde 3-phosphate from glycerone phosphate: step 1/1. Its function is as follows. Involved in the gluconeogenesis. Catalyzes stereospecifically the conversion of dihydroxyacetone phosphate (DHAP) to D-glyceraldehyde-3-phosphate (G3P). In Thermoanaerobacter pseudethanolicus (strain ATCC 33223 / 39E) (Clostridium thermohydrosulfuricum), this protein is Triosephosphate isomerase.